Consider the following 556-residue polypeptide: Glutamine--tRNA ligase (556 aa).

Positions 34–44 (PEPNGFLHIGH) match the 'HIGH' region motif. ATP-binding positions include 35-37 (EPN) and 41-47 (HIGHAKA). Residues Asp67 and Tyr212 each coordinate L-glutamine. ATP is bound by residues Thr231, 261-262 (RL), and 269-271 (MSK). The 'KMSKS' region motif lies at 268–272 (LMSKR).

It belongs to the class-I aminoacyl-tRNA synthetase family. As to quaternary structure, monomer.

The protein resides in the cytoplasm. It carries out the reaction tRNA(Gln) + L-glutamine + ATP = L-glutaminyl-tRNA(Gln) + AMP + diphosphate. The polypeptide is Glutamine--tRNA ligase (Colwellia psychrerythraea (strain 34H / ATCC BAA-681) (Vibrio psychroerythus)).